A 428-amino-acid polypeptide reads, in one-letter code: Growth/differentiation factor 2 (428 aa).

Positions 1–22 are cleaved as a signal peptide; it reads MSPGAFRVALLPLFLLVCVTQQ. Positions 23–318 are excised as a propeptide; it reads KPLQNWEQAS…VGPLLARRKR (296 aa). N-linked (GlcNAc...) asparagine glycans are attached at residues Asn70 and Asn135. An intrachain disulfide couples Cys155 to Cys236. An N-linked (GlcNAc...) asparagine glycan is attached at Asn262. 3 disulfides stabilise this stretch: Cys326–Cys392, Cys355–Cys425, and Cys359–Cys427. The interval 401 to 415 is interaction with ENG; that stretch reads SILYKDDMGVPTLKY.

It belongs to the TGF-beta family. Homodimer; disulfide-linked. Detected in extracellular fluid as mature homodimer, and in complex with its propeptide. Interacts with ACVRL1, BMPR2 and ACVR2B with high affinity (in vitro). Identified in a complex with ACVRL1 and ACVR2B. Has ten times lower affinity for ACVR2A (in vitro). Interacts with ENG, forming a heterotetramer with a 2:2 stoichiometry. Can form a heteromeric complex with ENG and ACVRL1. Interacts with type I receptor ACVR1. Post-translationally, a reversible disulfide bond can be formed between the two subunits in the homodimer; this has no effect on GDF2 activity.

The protein localises to the secreted. In terms of biological role, potent circulating inhibitor of angiogenesis. Signals through the type I activin receptor ACVRL1 but not other Alks. Signaling through SMAD1 in endothelial cells requires TGF-beta coreceptor endoglin/ENG. The sequence is that of Growth/differentiation factor 2 (Gdf2) from Mus musculus (Mouse).